The following is a 424-amino-acid chain: Caspase-2 (424 aa).

Positions 1–140 are excised as a propeptide; it reads MLGACGMQRY…IVEHSLDSGD (140 aa). The region spanning 7-96 is the CARD domain; sequence MQRYHQEALK…QHLAEMILKT (90 aa). Active-site residues include His248 and Cys291. Residues 296-310 show a composition bias toward basic and acidic residues; it reads TDRGVDQRDGKERSD. The interval 296–325 is disordered; it reads TDRGVDQRDGKERSDSPGCEESDANKEENL.

The protein belongs to the peptidase C14A family. In terms of assembly, heterotetramer that consists of two anti-parallel arranged heterodimers, each one formed by a p18 subunit and a p12 subunit.

The enzyme catalyses Strict requirement for an Asp residue at P1, with 316-Asp being essential for proteolytic activity and has a preferred cleavage sequence of Val-Asp-Val-Ala-Asp-|-.. Functionally, involved in the activation cascade of caspases responsible for apoptosis execution. Might function by either activating some proteins required for cell death or inactivating proteins necessary for cell survival. The polypeptide is Caspase-2 (CASP2) (Gallus gallus (Chicken)).